The following is a 617-amino-acid chain: 1-deoxy-D-xylulose-5-phosphate synthase (617 aa).

Thiamine diphosphate-binding positions include His-76 and 117–119 (GHS). Asp-148 contacts Mg(2+). Thiamine diphosphate contacts are provided by residues 149 to 150 (GA), Asn-177, Tyr-285, and Glu-366. Asn-177 contacts Mg(2+).

This sequence belongs to the transketolase family. DXPS subfamily. In terms of assembly, homodimer. Requires Mg(2+) as cofactor. Thiamine diphosphate serves as cofactor.

It carries out the reaction D-glyceraldehyde 3-phosphate + pyruvate + H(+) = 1-deoxy-D-xylulose 5-phosphate + CO2. The protein operates within metabolic intermediate biosynthesis; 1-deoxy-D-xylulose 5-phosphate biosynthesis; 1-deoxy-D-xylulose 5-phosphate from D-glyceraldehyde 3-phosphate and pyruvate: step 1/1. Catalyzes the acyloin condensation reaction between C atoms 2 and 3 of pyruvate and glyceraldehyde 3-phosphate to yield 1-deoxy-D-xylulose-5-phosphate (DXP). The sequence is that of 1-deoxy-D-xylulose-5-phosphate synthase from Mannheimia succiniciproducens (strain KCTC 0769BP / MBEL55E).